The sequence spans 555 residues: Urocanate hydratase (555 aa).

NAD(+)-binding positions include 52–53 (GG), Gln130, 176–178 (GMG), Glu196, Arg201, 242–243 (NA), 263–267 (QTSAH), 273–274 (YL), and Tyr322. Residue Cys410 is part of the active site. An NAD(+)-binding site is contributed by Gly492.

Belongs to the urocanase family. NAD(+) is required as a cofactor.

The protein localises to the cytoplasm. It catalyses the reaction 4-imidazolone-5-propanoate = trans-urocanate + H2O. It participates in amino-acid degradation; L-histidine degradation into L-glutamate; N-formimidoyl-L-glutamate from L-histidine: step 2/3. Functionally, catalyzes the conversion of urocanate to 4-imidazolone-5-propionate. The chain is Urocanate hydratase from Shewanella putrefaciens (strain CN-32 / ATCC BAA-453).